Here is a 158-residue protein sequence, read N- to C-terminus: AP-1 complex subunit sigma-1A (158 aa).

The residue at position 147 (serine 147) is a Phosphoserine.

It belongs to the adaptor complexes small subunit family. As to quaternary structure, adaptor protein complex 1 (AP-1) is a heterotetramer composed of two large adaptins (gamma-type subunit AP1G1 and beta-type subunit AP1B1), a medium adaptin (mu-type subunit AP1M1 or AP1M2) and a small adaptin (sigma-type subunit AP1S1 or AP1S2 or AP1S3). Widely expressed.

The protein resides in the golgi apparatus. The protein localises to the cytoplasmic vesicle membrane. Its subcellular location is the membrane. It localises to the clathrin-coated pit. In terms of biological role, subunit of clathrin-associated adaptor protein complex 1 that plays a role in protein sorting in the late-Golgi/trans-Golgi network (TGN) and/or endosomes. The AP complexes mediate both the recruitment of clathrin to membranes and the recognition of sorting signals within the cytosolic tails of transmembrane cargo molecules. The chain is AP-1 complex subunit sigma-1A (AP1S1) from Homo sapiens (Human).